Consider the following 108-residue polypeptide: RNA silencing suppressor (108 aa).

Positions 47–50 (RRRR) are basic. The C4-type zinc-finger motif lies at 57–78 (CHRCYRLWPPTVFTTRCDNKYC).

It belongs to the carlaviruses nucleic acid-binding protein family.

Suppressor of viral-induced RNA silencing. The potential mechanism of action is based on sequestering siRNAs. The sequence is that of RNA silencing suppressor from Solanum tuberosum (Potato).